Consider the following 49-residue polypeptide: Large ribosomal subunit protein bL33 (49 aa).

Belongs to the bacterial ribosomal protein bL33 family.

The polypeptide is Large ribosomal subunit protein bL33 (Pseudothermotoga lettingae (strain ATCC BAA-301 / DSM 14385 / NBRC 107922 / TMO) (Thermotoga lettingae)).